The chain runs to 525 residues: GMP synthase [glutamine-hydrolyzing] (525 aa).

In terms of domain architecture, Glutamine amidotransferase type-1 spans 8–207 (KILILDFGSQ…ALDICGCAAN (200 aa)). C85 functions as the Nucleophile in the catalytic mechanism. Residues H181 and E183 contribute to the active site. In terms of domain architecture, GMPS ATP-PPase spans 208–400 (WKPSSIIEDA…LGLPYNMLYR (193 aa)). ATP is bound at residue 235 to 241 (SGGVDSS).

Homodimer.

The catalysed reaction is XMP + L-glutamine + ATP + H2O = GMP + L-glutamate + AMP + diphosphate + 2 H(+). Its pathway is purine metabolism; GMP biosynthesis; GMP from XMP (L-Gln route): step 1/1. In terms of biological role, catalyzes the synthesis of GMP from XMP. This Shewanella baltica (strain OS155 / ATCC BAA-1091) protein is GMP synthase [glutamine-hydrolyzing].